The primary structure comprises 109 residues: MFGKGGMGNLMKQAQMMQEKMAKMQEEIARMEVTGESGAGLVKVTMTGTHNVRKVEIDPSLLEDDKELLEDLVAAACNDAARRVEENQKTKMAEVTGGMQLPPGMKMPF.

This sequence belongs to the YbaB/EbfC family. Homodimer.

The protein localises to the cytoplasm. The protein resides in the nucleoid. Its function is as follows. Binds to DNA and alters its conformation. May be involved in regulation of gene expression, nucleoid organization and DNA protection. This is Nucleoid-associated protein Sama_1311 from Shewanella amazonensis (strain ATCC BAA-1098 / SB2B).